The chain runs to 492 residues: Cytoplasmic dynein 1 light intermediate chain 2 (492 aa).

61 to 68 (GEDGSGKT) lines the ATP pocket. Disordered stretches follow at residues 187-206 (PEEG…SGSD), 371-423 (AKQP…KNNA), and 437-492 (LSKK…ENEA). S194 is subject to Phosphoserine. Over residues 371–381 (AKQPATPTRAS) the composition is skewed to polar residues. A phosphoserine mark is found at S383 and S391. The residue at position 397 (R397) is an Omega-N-methylarginine. Position 441 is a phosphothreonine (T441). Phosphoserine is present on residues S443 and S446. Over residues 452-469 (VQSTAKKSGQKTVLSNVQ) the composition is skewed to polar residues. Residues 471–480 (ELDRMTRKPD) show a composition bias toward basic and acidic residues. Positions 482-492 (MVTNSSTENEA) are enriched in polar residues.

The protein belongs to the dynein light intermediate chain family. In terms of assembly, homodimer. The cytoplasmic dynein 1 complex consists of two catalytic heavy chains (HCs) and a number of non-catalytic subunits presented by intermediate chains (ICs), light intermediate chains (LICs) and light chains (LCs); the composition seems to vary in respect to the IC, LIC and LC composition. The heavy chain homodimer serves as a scaffold for the probable homodimeric assembly of the respective non-catalytic subunits. The ICs and LICs bind directly to the HC dimer and the LCs assemble on the IC dimer. Interacts with DYNC1H1; DYNC1LI1 and DYNC1LI2 bind mutually exclusive to DYNC1H.

It is found in the cytoplasm. Its subcellular location is the cytoskeleton. Functionally, acts as one of several non-catalytic accessory components of the cytoplasmic dynein 1 complex that are thought to be involved in linking dynein to cargos and to adapter proteins that regulate dynein function. Cytoplasmic dynein 1 acts as a motor for the intracellular retrograde motility of vesicles and organelles along microtubules. May play a role in binding dynein to membranous organelles or chromosomes. This chain is Cytoplasmic dynein 1 light intermediate chain 2 (DYNC1LI2), found in Pongo abelii (Sumatran orangutan).